The chain runs to 318 residues: Taste receptor type 2 member 60 (318 aa).

Topologically, residues 1–7 (MNGDHMV) are extracellular. A helical membrane pass occupies residues 8-28 (LGSSMTDEKAIILVIILLLLC). The Cytoplasmic portion of the chain corresponds to 29 to 40 (LVAIAGNCFITA). Residues 41 to 61 (ALGMEWVLQRMLLPCDKLLVS) form a helical membrane-spanning segment. Over 62–88 (LGASRFCPQWVVMGKTTYVFLYPTAFP) the chain is Extracellular. Residues 89–109 (YNPVLRFLAFQWDLLNAATLW) traverse the membrane as a helical segment. Residues 110-128 (FSTWLSVFYCVKIATFTHP) are Cytoplasmic-facing. Residues 129–149 (VFLWLKHKLSEWVPWMLFSSV) traverse the membrane as a helical segment. The Extracellular segment spans residues 150-183 (GLSSFTTILFFIGNHRVYQSYLRNHLQPWNVTGN). Asn179 carries N-linked (GlcNAc...) asparagine glycosylation. The chain crosses the membrane as a helical span at residues 184–204 (SIWSYCEKFYLFPLKMITWTM). The Cytoplasmic segment spans residues 205 to 234 (PTAVFFICMILLITSLGRHMKKALLTNSGF). Residues 235 to 255 (RDPSVQAHIKAMLALLSFAML) traverse the membrane as a helical segment. Over 256-264 (FISYFLSLV) the chain is Extracellular. Residues 265 to 285 (FSAAGIFPPLDFKFWVWESVI) traverse the membrane as a helical segment. Residues 286–318 (YLCAAVHPIILLFSNRRLRAVLKRCRSSRCGTP) are Cytoplasmic-facing.

The protein belongs to the G-protein coupled receptor T2R family.

It is found in the membrane. Functionally, receptor that may play a role in the perception of bitterness and is gustducin-linked. May play a role in sensing the chemical composition of the gastrointestinal content. The activity of this receptor may stimulate alpha gustducin, mediate PLC-beta-2 activation and lead to the gating of TRPM5. The chain is Taste receptor type 2 member 60 (TAS2R60) from Pongo pygmaeus (Bornean orangutan).